Consider the following 316-residue polypeptide: Aprataxin (316 aa).

Positions 1–38 (HASARGEGFLLLKADCNKGYVTVKQIGVNPTSVDLVDV) constitute an FHA-like domain. Residues 104–142 (KKMEVVDTQSSSADLRPSKSSVSPHEGTTSRKEHLGHWS) form a disordered region. Over residues 110 to 130 (DTQSSSADLRPSKSSVSPHEG) the composition is skewed to polar residues. One can recognise an HIT domain in the interval 142–247 (SQGLKSSMQD…ISQDFDSPAL (106 aa)). 2 interaction with DNA substrate regions span residues 167-171 (DKYPK) and 229-230 (SM). Positions 232-236 (QLHLH) match the Histidine triad motif motif. H234 serves as the catalytic Tele-AMP-histidine intermediate. A C2H2-type zinc finger spans residues 291–313 (LRCHLCKQQLSTIPQLKEHLKKH).

The protein localises to the nucleus. Its subcellular location is the nucleoplasm. It is found in the nucleolus. It carries out the reaction a 5'-end adenosine-5'-diphospho-5'-2'-deoxyribonucleoside-DNA + H2O = a 5'-end 5'-phospho-2'-deoxyribonucleoside-DNA + AMP + 2 H(+). It catalyses the reaction a 5'-end adenosine-5'-diphospho-5'-ribonucleoside-2'-deoxyribonucleotide-DNA + H2O = a 5'-end 5'-phospho-ribonucleoside-2'-deoxyribonucleotide-DNA + AMP + 2 H(+). The enzyme catalyses a 3'-end 2'-deoxyribonucleotide-3'-diphospho-5'-guanosine-DNA + H2O = a 3'-end 2'-deoxyribonucleotide 3'-phosphate-DNA + GMP + 2 H(+). Functionally, DNA-binding protein involved in single-strand DNA break repair, double-strand DNA break repair and base excision repair. Resolves abortive DNA ligation intermediates formed either at base excision sites, or when DNA ligases attempt to repair non-ligatable breaks induced by reactive oxygen species. Catalyzes the release of adenylate groups covalently linked to 5'-phosphate termini, resulting in the production of 5'-phosphate termini that can be efficiently rejoined. Also able to hydrolyze adenosine 5'-monophosphoramidate (AMP-NH(2)) and diadenosine tetraphosphate (AppppA), but with lower catalytic activity. Likewise, catalyzes the release of 3'-linked guanosine (DNAppG) and inosine (DNAppI) from DNA, but has higher specific activity with 5'-linked adenosine (AppDNA). In Gallus gallus (Chicken), this protein is Aprataxin (APTX).